Here is a 291-residue protein sequence, read N- to C-terminus: m-AAA protease-interacting protein 1, mitochondrial (291 aa).

The N-terminal 96 residues, 1-96, are a transit peptide targeting the mitochondrion; it reads MALAVRLLPR…TFPSCPRRTY (96 aa).

Interacts with AFG3L2. Interacts with SPG7. Interacts with SMDT1/EMRE (via the N-terminal transit peptide); interaction is direct and takes place before maturation of SMDT1/EMRE.

The protein localises to the mitochondrion matrix. Its function is as follows. Promotes sorting of SMDT1/EMRE in mitochondria by ensuring its maturation. Interacts with the transit peptide region of SMDT1/EMRE precursor protein in the mitochondrial matrix, leading to protect it against protein degradation by YME1L1, thereby ensuring SMDT1/EMRE maturation by the mitochondrial processing peptidase (PMPCA and PMPCB). The chain is m-AAA protease-interacting protein 1, mitochondrial from Bos taurus (Bovine).